The chain runs to 272 residues: 3-methyl-2-oxobutanoate hydroxymethyltransferase (272 aa).

Mg(2+)-binding residues include Asp-51 and Asp-90. 3-methyl-2-oxobutanoate contacts are provided by residues Asp-51–Ser-52, Asp-90, and Lys-118. Glu-120 is a binding site for Mg(2+). The active-site Proton acceptor is the Glu-187.

Belongs to the PanB family. In terms of assembly, homodecamer; pentamer of dimers. The cofactor is Mg(2+).

It is found in the cytoplasm. The catalysed reaction is 3-methyl-2-oxobutanoate + (6R)-5,10-methylene-5,6,7,8-tetrahydrofolate + H2O = 2-dehydropantoate + (6S)-5,6,7,8-tetrahydrofolate. It functions in the pathway cofactor biosynthesis; (R)-pantothenate biosynthesis; (R)-pantoate from 3-methyl-2-oxobutanoate: step 1/2. Its function is as follows. Catalyzes the reversible reaction in which hydroxymethyl group from 5,10-methylenetetrahydrofolate is transferred onto alpha-ketoisovalerate to form ketopantoate. This chain is 3-methyl-2-oxobutanoate hydroxymethyltransferase, found in Xylella fastidiosa (strain 9a5c).